Consider the following 276-residue polypeptide: Shikimate dehydrogenase (NADP(+)) (276 aa).

Residues 14–16 (SKS) and Thr-61 each bind shikimate. Lys-65 serves as the catalytic Proton acceptor. Asp-77 contacts NADP(+). Residues Asn-86 and Asp-102 each coordinate shikimate. NADP(+) contacts are provided by residues 127–131 (GAGGA), 151–156 (NRTPDK), and Met-214. Tyr-216 serves as a coordination point for shikimate. NADP(+) is bound at residue Gly-238.

It belongs to the shikimate dehydrogenase family. As to quaternary structure, homodimer.

The enzyme catalyses shikimate + NADP(+) = 3-dehydroshikimate + NADPH + H(+). Its pathway is metabolic intermediate biosynthesis; chorismate biosynthesis; chorismate from D-erythrose 4-phosphate and phosphoenolpyruvate: step 4/7. In terms of biological role, involved in the biosynthesis of the chorismate, which leads to the biosynthesis of aromatic amino acids. Catalyzes the reversible NADPH linked reduction of 3-dehydroshikimate (DHSA) to yield shikimate (SA). The sequence is that of Shikimate dehydrogenase (NADP(+)) from Nitrosomonas europaea (strain ATCC 19718 / CIP 103999 / KCTC 2705 / NBRC 14298).